The following is a 129-amino-acid chain: uncharacterized protein (129 aa).

An N-terminal signal peptide occupies residues 1-20 (MIYPLFRICILGAFLLGSYA).

This is an uncharacterized protein from Saccharomyces cerevisiae (strain ATCC 204508 / S288c) (Baker's yeast).